Reading from the N-terminus, the 295-residue chain is Small ribosomal subunit protein uS2 (295 aa).

The disordered stretch occupies residues K263 to A295.

This sequence belongs to the universal ribosomal protein uS2 family.

The chain is Small ribosomal subunit protein uS2 from Rickettsia massiliae (strain Mtu5).